The sequence spans 376 residues: Putative glutamate--cysteine ligase 2 (376 aa).

The protein belongs to the glutamate--cysteine ligase type 2 family. YbdK subfamily.

The catalysed reaction is L-cysteine + L-glutamate + ATP = gamma-L-glutamyl-L-cysteine + ADP + phosphate + H(+). In terms of biological role, ATP-dependent carboxylate-amine ligase which exhibits weak glutamate--cysteine ligase activity. The chain is Putative glutamate--cysteine ligase 2 from Corynebacterium glutamicum (strain R).